A 390-amino-acid polypeptide reads, in one-letter code: Putative nickel insertion protein (390 aa).

Belongs to the LarC family.

This is Putative nickel insertion protein from Geotalea daltonii (strain DSM 22248 / JCM 15807 / FRC-32) (Geobacter daltonii).